The chain runs to 297 residues: Tyrosine recombinase XerD (297 aa).

The Core-binding (CB) domain maps to 1–87; it reads MLEYAIEDFF…SIRSFHQFLI (87 aa). In terms of domain architecture, Tyr recombinase spans 108 to 291; that stretch reads KLPDILSQDE…TKARLKDMYQ (184 aa). Active-site residues include Arg-147, Lys-171, His-243, Arg-246, and His-269. Residue Tyr-278 is the O-(3'-phospho-DNA)-tyrosine intermediate of the active site.

Belongs to the 'phage' integrase family. XerD subfamily. Forms a cyclic heterotetrameric complex composed of two molecules of XerC and two molecules of XerD.

The protein resides in the cytoplasm. Its function is as follows. Site-specific tyrosine recombinase, which acts by catalyzing the cutting and rejoining of the recombining DNA molecules. The XerC-XerD complex is essential to convert dimers of the bacterial chromosome into monomers to permit their segregation at cell division. It also contributes to the segregational stability of plasmids. The protein is Tyrosine recombinase XerD of Oceanobacillus iheyensis (strain DSM 14371 / CIP 107618 / JCM 11309 / KCTC 3954 / HTE831).